A 642-amino-acid polypeptide reads, in one-letter code: Conserved oligomeric Golgi complex subunit 6 (642 aa).

The protein belongs to the COG6 family. In terms of assembly, component of the conserved oligomeric Golgi complex which is composed of eight different subunits and is required for normal Golgi morphology and localization.

The protein localises to the golgi apparatus membrane. Its function is as follows. Required for normal Golgi function. This chain is Conserved oligomeric Golgi complex subunit 6 (cogc-6), found in Caenorhabditis elegans.